The chain runs to 179 residues: Large ribosomal subunit protein uL6 (179 aa).

The protein belongs to the universal ribosomal protein uL6 family. Part of the 50S ribosomal subunit.

In terms of biological role, this protein binds to the 23S rRNA, and is important in its secondary structure. It is located near the subunit interface in the base of the L7/L12 stalk, and near the tRNA binding site of the peptidyltransferase center. This is Large ribosomal subunit protein uL6 from Mycobacterium leprae (strain Br4923).